We begin with the raw amino-acid sequence, 959 residues long: Glycine dehydrogenase (decarboxylating) (959 aa).

Lysine 708 carries the post-translational modification N6-(pyridoxal phosphate)lysine.

This sequence belongs to the GcvP family. The glycine cleavage system is composed of four proteins: P, T, L and H. It depends on pyridoxal 5'-phosphate as a cofactor.

The enzyme catalyses N(6)-[(R)-lipoyl]-L-lysyl-[glycine-cleavage complex H protein] + glycine + H(+) = N(6)-[(R)-S(8)-aminomethyldihydrolipoyl]-L-lysyl-[glycine-cleavage complex H protein] + CO2. Functionally, the glycine cleavage system catalyzes the degradation of glycine. The P protein binds the alpha-amino group of glycine through its pyridoxal phosphate cofactor; CO(2) is released and the remaining methylamine moiety is then transferred to the lipoamide cofactor of the H protein. The polypeptide is Glycine dehydrogenase (decarboxylating) (Serratia proteamaculans (strain 568)).